Consider the following 133-residue polypeptide: ATP synthase epsilon chain, chloroplastic (133 aa).

Belongs to the ATPase epsilon chain family. F-type ATPases have 2 components, CF(1) - the catalytic core - and CF(0) - the membrane proton channel. CF(1) has five subunits: alpha(3), beta(3), gamma(1), delta(1), epsilon(1). CF(0) has three main subunits: a, b and c.

It is found in the plastid. The protein localises to the chloroplast thylakoid membrane. Produces ATP from ADP in the presence of a proton gradient across the membrane. The protein is ATP synthase epsilon chain, chloroplastic of Psilotum nudum (Whisk fern).